A 238-amino-acid polypeptide reads, in one-letter code: uncharacterized protein (238 aa).

The protein belongs to the chlamydial CPn_0658/CT_538/TC_0825 family.

This is an uncharacterized protein from Chlamydia muridarum (strain MoPn / Nigg).